Consider the following 1367-residue polypeptide: Phospholipid-transporting ATPase C4F10.16c (1367 aa).

Residues 1–154 (MPSLINFDAI…PKNLWNQFKN (154 aa)) are Cytoplasmic-facing. Positions 34–104 (HNGSLAHEGP…KKNEAGTESG (71 aa)) are disordered. The span at 50–70 (SSRHHESQFSQEAHAEQRSRD) shows a compositional bias: basic and acidic residues. Residues 77 to 92 (FEGSCNNSDQSWTSRV) are compositionally biased toward polar residues. A helical transmembrane segment spans residues 155 to 172 (IANAFFLFVTLLQCIPLF). Topologically, residues 173–177 (CPEHL) are lumenal. The chain crosses the membrane as a helical span at residues 178-197 (GLSFIPLSVILLTTAIKDGI). Over 198–482 (EDYRRCVLDK…PSKRSRITRD (285 aa)) the chain is Cytoplasmic. The helical transmembrane segment at 483-503 (LNWTIILNFLLLFAMCLFSGV) threads the bilayer. Over 504–531 (LRSIYSAQNNSARVFELSKNSNTAPAHG) the chain is Lumenal. Residues 532–552 (IISIFTSLILFQNLVPISLYI) traverse the membrane as a helical segment. The Cytoplasmic segment spans residues 553–1091 (TMDIVRSIQS…GRWDYKRMSQ (539 aa)). Asp-600 acts as the 4-aspartylphosphate intermediate in catalysis. The ATP site is built by Asp-600, Lys-601, Thr-602, Glu-724, Phe-765, Ser-767, Lys-770, Lys-788, Arg-822, Thr-823, Thr-902, Gly-903, Asp-904, Arg-1009, and Lys-1015. Asp-600 contacts Mg(2+). Thr-602 provides a ligand contact to Mg(2+). Residue Asp-1035 coordinates Mg(2+). Residues Asn-1038 and Asp-1039 each contribute to the ATP site. Position 1039 (Asp-1039) interacts with Mg(2+). The helical transmembrane segment at 1092-1112 (MISFFFYKNVIWTFILFWYQF) threads the bilayer. Residues 1113-1124 (YNEFDGNYIFDY) lie on the Lumenal side of the membrane. Residues 1125–1145 (TYVMLFNLLFTSLPVIIAGCF) traverse the membrane as a helical segment. Residues 1146–1174 (DQDVDASVSMKNPSLYQRGILGLEWNGKR) are Cytoplasmic-facing. The helical transmembrane segment at 1175 to 1197 (FWSYMLDGIYQSLVCFGVALFVF) threads the bilayer. At 1198–1212 (KFGDFVSWTGRNIEC) the chain is on the lumenal side. The chain crosses the membrane as a helical span at residues 1213–1233 (IEDIGLFISSPTIFVINIFIL). The Cytoplasmic segment spans residues 1234-1240 (MNQERLN). The helical transmembrane segment at 1241 to 1261 (LISLITWMFSIGVFWIWTFIY) threads the bilayer. Residues 1262–1276 (SEVGPSYAFHKSASR) are Lumenal-facing. Residues 1277-1297 (TCQTFGFWCVTVLTIALCLLP) form a helical membrane-spanning segment. Arg-1298 contributes to the a 1,2-diacyl-sn-glycero-3-phospho-L-serine binding site. The Cytoplasmic segment spans residues 1298–1367 (RFSYICLQKL…TSVSFDDSNK (70 aa)).

The protein belongs to the cation transport ATPase (P-type) (TC 3.A.3) family. Type IV subfamily. The cofactor is Mg(2+).

The protein resides in the cell membrane. It is found in the endoplasmic reticulum membrane. It carries out the reaction ATP + H2O + phospholipidSide 1 = ADP + phosphate + phospholipidSide 2.. The enzyme catalyses a 1,2-diacyl-sn-glycero-3-phosphoethanolamine(out) + ATP + H2O = a 1,2-diacyl-sn-glycero-3-phosphoethanolamine(in) + ADP + phosphate + H(+). The catalysed reaction is a 1,2-diacyl-sn-glycero-3-phosphocholine(out) + ATP + H2O = a 1,2-diacyl-sn-glycero-3-phosphocholine(in) + ADP + phosphate + H(+). It catalyses the reaction a beta-D-glucosyl-(1&lt;-&gt;1')-N-acylsphing-4-enine(out) + ATP + H2O = a beta-D-glucosyl-(1&lt;-&gt;1')-N-acylsphing-4-enine(in) + ADP + phosphate + H(+). It carries out the reaction a 1,2-diacyl-sn-glycero-3-phospho-L-serine(out) + ATP + H2O = a 1,2-diacyl-sn-glycero-3-phospho-L-serine(in) + ADP + phosphate + H(+). Catalytic component of a P4-ATPase flippase complex which catalyzes the hydrolysis of ATP coupled to the transport of glucosylceramide, phosphatidylcholine, phosphatidylethanolamine, and small amounts of phosphatidylserine from the lumenal to the cytosolic leaflet of the cell membrane and ensures the maintenance of asymmetric distribution of phospholipids. This is Phospholipid-transporting ATPase C4F10.16c from Schizosaccharomyces pombe (strain 972 / ATCC 24843) (Fission yeast).